The sequence spans 132 residues: MVMTDPISDMLTRIRNANTVRHEKLELPASKIKKEIAEILKREGFIRDYEYIEDSKQGVIRIFLKYGSSNERVITGLKRISKPGLRVYAKAGELPRVLGGLGIAIVSTSKGVMTDKEARQQQVGGEVLAYVW.

This sequence belongs to the universal ribosomal protein uS8 family. In terms of assembly, part of the 30S ribosomal subunit. Contacts proteins S5 and S12.

Its function is as follows. One of the primary rRNA binding proteins, it binds directly to 16S rRNA central domain where it helps coordinate assembly of the platform of the 30S subunit. The protein is Small ribosomal subunit protein uS8 of Halalkalibacterium halodurans (strain ATCC BAA-125 / DSM 18197 / FERM 7344 / JCM 9153 / C-125) (Bacillus halodurans).